The following is an 81-amino-acid chain: Photosystem I iron-sulfur center (81 aa).

4Fe-4S ferredoxin-type domains lie at 2–31 (SHSV…MIPW) and 39–68 (IASA…VRVY). The [4Fe-4S] cluster site is built by Cys11, Cys14, Cys17, Cys21, Cys48, Cys51, Cys54, and Cys58.

The eukaryotic PSI reaction center is composed of at least 11 subunits. It depends on [4Fe-4S] cluster as a cofactor.

The protein localises to the plastid. Its subcellular location is the chloroplast thylakoid membrane. It carries out the reaction reduced [plastocyanin] + hnu + oxidized [2Fe-2S]-[ferredoxin] = oxidized [plastocyanin] + reduced [2Fe-2S]-[ferredoxin]. Functionally, apoprotein for the two 4Fe-4S centers FA and FB of photosystem I (PSI); essential for photochemical activity. FB is the terminal electron acceptor of PSI, donating electrons to ferredoxin. The C-terminus interacts with PsaA/B/D and helps assemble the protein into the PSI complex. Required for binding of PsaD and PsaE to PSI. PSI is a plastocyanin-ferredoxin oxidoreductase, converting photonic excitation into a charge separation, which transfers an electron from the donor P700 chlorophyll pair to the spectroscopically characterized acceptors A0, A1, FX, FA and FB in turn. The polypeptide is Photosystem I iron-sulfur center (Triticum aestivum (Wheat)).